Consider the following 249-residue polypeptide: NADH dehydrogenase [ubiquinone] flavoprotein 2, mitochondrial (249 aa).

The transit peptide at 1–32 (MFFSAALRARAAGLTAHWGRHVRNLHKTAKQN) directs the protein to the mitochondrion. K61 bears the N6-acetyllysine mark. [2Fe-2S] cluster contacts are provided by C135, C140, C176, and C180. Y193 carries the post-translational modification Phosphotyrosine; by SRC. Residues 213-249 (IPKPGPRSGRFSCEPAGGLTSLTEPPKGPGFGVQAGL) form a disordered region.

It belongs to the complex I 24 kDa subunit family. In terms of assembly, core subunit of respiratory chain NADH dehydrogenase (Complex I) which is composed of 45 different subunits. This is a component of the flavoprotein-sulfur (FP) fragment of the enzyme. It depends on [2Fe-2S] cluster as a cofactor.

It localises to the mitochondrion inner membrane. The catalysed reaction is a ubiquinone + NADH + 5 H(+)(in) = a ubiquinol + NAD(+) + 4 H(+)(out). In terms of biological role, core subunit of the mitochondrial membrane respiratory chain NADH dehydrogenase (Complex I) which catalyzes electron transfer from NADH through the respiratory chain, using ubiquinone as an electron acceptor. Parts of the peripheral arm of the enzyme, where the electrons from NADH are accepted by flavin mononucleotide (FMN) and then passed along a chain of iron-sulfur clusters by electron tunnelling to the final acceptor ubiquinone. Contains one iron-sulfur cluster. The sequence is that of NADH dehydrogenase [ubiquinone] flavoprotein 2, mitochondrial from Pan troglodytes (Chimpanzee).